The following is a 235-amino-acid chain: Large ribosomal subunit protein uL1c (235 aa).

It belongs to the universal ribosomal protein uL1 family. As to quaternary structure, part of the 50S ribosomal subunit.

The protein localises to the plastid. It is found in the chloroplast. Binds directly to 23S rRNA. Might be involved in E site tRNA release (Potential). This chain is Large ribosomal subunit protein uL1c (rpl1), found in Gracilaria tenuistipitata var. liui (Red alga).